The sequence spans 423 residues: Serine hydroxymethyltransferase (423 aa).

Residue G119–I121 coordinates (6S)-5,6,7,8-tetrahydrofolate. At K225 the chain carries N6-(pyridoxal phosphate)lysine.

This sequence belongs to the SHMT family. As to quaternary structure, homodimer. The cofactor is pyridoxal 5'-phosphate.

The protein localises to the cytoplasm. It carries out the reaction (6R)-5,10-methylene-5,6,7,8-tetrahydrofolate + glycine + H2O = (6S)-5,6,7,8-tetrahydrofolate + L-serine. Its pathway is one-carbon metabolism; tetrahydrofolate interconversion. It participates in amino-acid biosynthesis; glycine biosynthesis; glycine from L-serine: step 1/1. In terms of biological role, catalyzes the reversible interconversion of serine and glycine with tetrahydrofolate (THF) serving as the one-carbon carrier. Also exhibits THF-independent aldolase activity toward beta-hydroxyamino acids, producing glycine and aldehydes, via a retro-aldol mechanism. The polypeptide is Serine hydroxymethyltransferase (Methanocella arvoryzae (strain DSM 22066 / NBRC 105507 / MRE50)).